The following is an 805-amino-acid chain: Chloride channel protein (805 aa).

The Cytoplasmic segment spans residues 1–48; it reads MSHEKNEASGYPEAQSWKSQEAMLGARTEVSRWRAVKNCLYRHLVKVL. A run of 2 helical transmembrane segments spans residues 49-86 and 93-116; these read GEDW…LFAL and LQYL…CQIV. Positions 122–126 match the Selectivity filter part_1 motif; the sequence is GSGIP. Serine 123 serves as a coordination point for chloride. The helical intramembrane region spans 125 to 132; the sequence is IPELKTII. 2 helical membrane passes run 141–159 and 166–184; these read LTLR…ALSA and EGPF…NQLL. Residues 164-168 carry the Selectivity filter part_2 motif; sequence GKEGP. 2 consecutive intramembrane regions (helical) follow at residues 201–213 and 217–225; these read ILTV…ISCC and PLAGVLFSI. A run of 3 helical transmembrane segments spans residues 237 to 256, 283 to 311, and 320 to 339; these read YWRG…VLSV, MPAF…IVFM, and ILKK…LATL. A glycan (N-linked (GlcNAc...) asparagine) is linked at asparagine 365. A run of 2 helical transmembrane segments spans residues 388 to 408 and 416 to 439; these read LNIF…AALA and GAFV…MALL. Positions 416–420 match the Selectivity filter part_3 motif; sequence GAFVP. Position 418 (phenylalanine 418) interacts with chloride. Positions 456–470 form an intramembrane region, helical; the sequence is GEYAVIGAAAMTGAV. An intramembrane region (note=Loop between two helices) is located at residues 471–472; sequence TH. Residues 473-484 constitute an intramembrane region (helical); the sequence is AVSTAVICFELT. Residues 485-489 constitute an intramembrane region (note=Loop between two helices); the sequence is GQISH. Residues 490–507 traverse the membrane as a helical segment; the sequence is VLPMMVAVILANMVAQGL. The Cytoplasmic segment spans residues 508 to 805; the sequence is QPSLYDSIIQ…RTATSNSSGK (298 aa). Tyrosine 512 is a binding site for chloride. The 59-residue stretch at 543–601 folds into the CBS 1 domain; sequence MVRDVTSIASTSTYGDLLHVLRQTKLKFFPFVDTPDTNTLLGSIDRTEVEGLLQRRISA. 2 disordered regions span residues 606–625 and 653–684; these read PAAA…GASF and KVQT…QKGT. Residues 719–776 form the CBS 2 domain; that stretch reads IDQSPFQLVEGTSLQKTHTLFSLLGLDRAYVTSMGKLVGVVALAEIQAAIEGSYQKGF.

This sequence belongs to the chloride channel (TC 2.A.49) family. ClC-0 subfamily. In terms of assembly, homodimer. Each subunit contains a channel ('Double barreled channel').

The protein resides in the membrane. In terms of biological role, voltage-gated chloride channel. This channel is thought to ensure the high conductance of the non-innervated membrane of the electrocyte necessary for efficient current generation caused by sodium influx through the acetylcholine receptor at the innervated membrane. The polypeptide is Chloride channel protein (Torpedo marmorata (Marbled electric ray)).